Here is a 493-residue protein sequence, read N- to C-terminus: MNKHASQPRAIYYVVALQIWEYFSFYGMRALLILYLTNQLKYNDTHAYELFSAYCSLVYVTPILGGFLADKVLGNRMAVMLGALLMAIGHVVLGASEIHPSFLYLSLAIIVCGYGLFKSNVSCLLGELYEPTDPRRDGGFSLMYAAGNVGSIIAPIACGYAQEEYSWAMGFGLAAVGMIAGLVIFLCGNRHFTHTRGVNKKVLRATNFLLPNWGWLLVLLVATPALITILFWKEWSVYALIVATIIGLGVLAKIYRKAENQKQRKELGLIVTLTFFSMLFWAFAQQGGSSISLYIDRFVNRDMFGYTVPTAMFQSINAFAVMLCGVFLAWVVKESVAGNRTVRIWGKFALGLGLMSAGFCILTLSARWSAMYGHSSLPLMVLGLAVMGFAELFIDPVAMSQITRIEIPGVTGVLTGIYMLLSGAIANYLAGVIADQTSQASFDASGAINYSINAYIEVFDQITWGALACVGLVLMIWLYQALKFRNRALALES.

At 1-13 the chain is on the cytoplasmic side; it reads MNKHASQPRAIYY. The helical transmembrane segment at 14 to 34 threads the bilayer; that stretch reads VVALQIWEYFSFYGMRALLIL. At 35–48 the chain is on the periplasmic side; the sequence is YLTNQLKYNDTHAY. A helical membrane pass occupies residues 49-69; sequence ELFSAYCSLVYVTPILGGFLA. Residues 70 to 77 lie on the Cytoplasmic side of the membrane; sequence DKVLGNRM. A helical transmembrane segment spans residues 78–98; the sequence is AVMLGALLMAIGHVVLGASEI. Residues 99–100 lie on the Periplasmic side of the membrane; sequence HP. The helical transmembrane segment at 101–121 threads the bilayer; it reads SFLYLSLAIIVCGYGLFKSNV. Topologically, residues 122 to 137 are cytoplasmic; sequence SCLLGELYEPTDPRRD. A helical transmembrane segment spans residues 138–158; sequence GGFSLMYAAGNVGSIIAPIAC. Topologically, residues 159-166 are periplasmic; sequence GYAQEEYS. Residues 167–187 form a helical membrane-spanning segment; it reads WAMGFGLAAVGMIAGLVIFLC. The Cytoplasmic segment spans residues 188-211; the sequence is GNRHFTHTRGVNKKVLRATNFLLP. Residues 212–232 traverse the membrane as a helical segment; the sequence is NWGWLLVLLVATPALITILFW. Residues 233 to 234 lie on the Periplasmic side of the membrane; that stretch reads KE. The helical transmembrane segment at 235–255 threads the bilayer; sequence WSVYALIVATIIGLGVLAKIY. The Cytoplasmic segment spans residues 256 to 266; it reads RKAENQKQRKE. A helical transmembrane segment spans residues 267 to 287; the sequence is LGLIVTLTFFSMLFWAFAQQG. Residues 288–311 are Periplasmic-facing; it reads GSSISLYIDRFVNRDMFGYTVPTA. Residues 312–332 traverse the membrane as a helical segment; the sequence is MFQSINAFAVMLCGVFLAWVV. Residues 333-343 are Cytoplasmic-facing; the sequence is KESVAGNRTVR. A helical membrane pass occupies residues 344-364; sequence IWGKFALGLGLMSAGFCILTL. At 365 to 378 the chain is on the periplasmic side; it reads SARWSAMYGHSSLP. A helical transmembrane segment spans residues 379–399; it reads LMVLGLAVMGFAELFIDPVAM. Residues 400–412 are Cytoplasmic-facing; sequence SQITRIEIPGVTG. The chain crosses the membrane as a helical span at residues 413 to 433; it reads VLTGIYMLLSGAIANYLAGVI. Topologically, residues 434-461 are periplasmic; the sequence is ADQTSQASFDASGAINYSINAYIEVFDQ. Residues 462–482 form a helical membrane-spanning segment; the sequence is ITWGALACVGLVLMIWLYQAL. Topologically, residues 483–493 are cytoplasmic; sequence KFRNRALALES.

The protein belongs to the major facilitator superfamily. Proton-dependent oligopeptide transporter (POT/PTR) (TC 2.A.17) family. DtpD subfamily.

Its subcellular location is the cell inner membrane. Its function is as follows. Probable proton-dependent permease that transports dipeptides. The chain is Dipeptide permease D (dtpD) from Escherichia coli (strain K12).